The primary structure comprises 328 residues: dTDP-3,4-didehydro-2,6-dideoxy-alpha-D-glucose 3-reductase (328 aa).

Position 20 (Arg-20) interacts with substrate. NADP(+)-binding positions include 38–39 (SR), Leu-75, and His-80. The active-site Proton donor is the Lys-98. NADP(+) contacts are provided by Arg-166 and Asp-178. Substrate-binding residues include Tyr-236 and Thr-256.

This sequence belongs to the Gfo/Idh/MocA family.

The catalysed reaction is dTDP-4-dehydro-2,6-dideoxy-alpha-D-glucose + NADP(+) = dTDP-3,4-didehydro-2,6-dideoxy-alpha-D-glucose + NADPH + H(+). It functions in the pathway antibiotic biosynthesis. Functionally, involved in the biosynthesis of one of the two 2,6-deoxysugars, dTDP-L-oleandrose, attached to the macrolactone ring oleandolide to produce the aglycone antibiotic oleandomycin. Catalyzes the reduction of the C-3 keto moiety of dTDP-3,4-diketo-2,6-dideoxy-alpha-D-glucose to yield dTDP-4-keto-2,6-dideoxy-alpha-D-glucose. NADPH is the better reductant, however NADH can also be used. This is dTDP-3,4-didehydro-2,6-dideoxy-alpha-D-glucose 3-reductase from Streptomyces antibioticus.